A 61-amino-acid chain; its full sequence is Probable tautomerase BA_5626/GBAA_5626/BAS5226 (61 aa).

Pro2 functions as the Proton acceptor; via imino nitrogen in the catalytic mechanism.

This sequence belongs to the 4-oxalocrotonate tautomerase family.

The protein is Probable tautomerase BA_5626/GBAA_5626/BAS5226 of Bacillus anthracis.